The sequence spans 344 residues: MTQKLTITRPDDWHLHLRDGAALAAVLPDTARQFARAIIMPNLKPPVTTVAQAQAYRARILAALPAGLQFEPLMTLYLTDNTTAEEIAAAKASGFVHGVKLYPAGATTNSDAGVTDIRRCYPALEAMQRAGLPLLVHGEVTDPSIDIFDREAVFIDRVMTPLRRDMPELKVVFEHITTKDAAEYVRDASGPVGATITAHHLLYNRNAIFTGGIRPHYYCLPVLKRETHREALVAAAVSGSPRFFLGTDSAPHARGLKEHACGCAGCYTALHAMELYAEAFDAAGALDKLEAFASFNGPAFYGLPRNTGTLTLEREDWELPAELPYGDTTLVPLRGGETLRWKAR.

Zn(2+)-binding residues include histidine 14 and histidine 16. Residues 16-18 (HLR) and asparagine 42 contribute to the substrate site. The Zn(2+) site is built by lysine 100, histidine 137, and histidine 175. Lysine 100 is modified (N6-carboxylysine). Residue histidine 137 participates in substrate binding. Leucine 220 is a substrate binding site. Aspartate 248 is a binding site for Zn(2+). The active site involves aspartate 248. Substrate is bound by residues histidine 252 and alanine 264.

Belongs to the metallo-dependent hydrolases superfamily. DHOase family. Class II DHOase subfamily. Homodimer. Zn(2+) is required as a cofactor.

It catalyses the reaction (S)-dihydroorotate + H2O = N-carbamoyl-L-aspartate + H(+). It participates in pyrimidine metabolism; UMP biosynthesis via de novo pathway; (S)-dihydroorotate from bicarbonate: step 3/3. Functionally, catalyzes the reversible cyclization of carbamoyl aspartate to dihydroorotate. The sequence is that of Dihydroorotase from Cupriavidus necator (strain ATCC 17699 / DSM 428 / KCTC 22496 / NCIMB 10442 / H16 / Stanier 337) (Ralstonia eutropha).